We begin with the raw amino-acid sequence, 529 residues long: F-box/LRR-repeat protein At5g63520 (529 aa).

Positions 1 to 22 (MAEVSLTKKEMTTKGKSENSKK) are disordered. The F-box domain occupies 31–78 (VPIAAMNEDLLHNILLRLPAKSFAFASCVNRFWSSVCNRILSRPKMIS). 2 LRR repeats span residues 265 to 288 (GNEPRNVQLQKDDIRVLAGLIFAR) and 418 to 441 (QVYLPDLKVAEAALNDVSAQLRNL).

This chain is F-box/LRR-repeat protein At5g63520, found in Arabidopsis thaliana (Mouse-ear cress).